We begin with the raw amino-acid sequence, 466 residues long: Cysteine--tRNA ligase (466 aa).

Cys28 provides a ligand contact to Zn(2+). The short motif at 30-40 (PTVYNYIHIGN) is the 'HIGH' region element. Residues Cys208, His233, and Glu237 each contribute to the Zn(2+) site. The 'KMSKS' region signature appears at 265 to 269 (KMSKS). Lys268 provides a ligand contact to ATP.

The protein belongs to the class-I aminoacyl-tRNA synthetase family. As to quaternary structure, monomer. It depends on Zn(2+) as a cofactor.

Its subcellular location is the cytoplasm. It catalyses the reaction tRNA(Cys) + L-cysteine + ATP = L-cysteinyl-tRNA(Cys) + AMP + diphosphate. The polypeptide is Cysteine--tRNA ligase (Staphylococcus haemolyticus (strain JCSC1435)).